The primary structure comprises 384 residues: Spermidine/putrescine import ATP-binding protein PotA (384 aa).

An ABC transporter domain is found at 6–238 (ITFNNVSKTF…PINHFVANFI (233 aa)). Residue 40–47 (GASGSGKS) participates in ATP binding.

It belongs to the ABC transporter superfamily. Spermidine/putrescine importer (TC 3.A.1.11.1) family. In terms of assembly, the complex is composed of two ATP-binding proteins (PotA), two transmembrane proteins (PotB and PotC) and a solute-binding protein (PotD).

It is found in the cell membrane. It catalyses the reaction ATP + H2O + polyamine-[polyamine-binding protein]Side 1 = ADP + phosphate + polyamineSide 2 + [polyamine-binding protein]Side 1.. Part of the ABC transporter complex PotABCD involved in spermidine/putrescine import. Responsible for energy coupling to the transport system. The chain is Spermidine/putrescine import ATP-binding protein PotA from Streptococcus pyogenes serotype M28 (strain MGAS6180).